The following is a 224-amino-acid chain: PKHD-type hydroxylase tll1907 (224 aa).

The Fe2OG dioxygenase domain maps to 77-176; that stretch reads KIIGPLLFSR…RLVAVAWVQS (100 aa). Positions 96, 98, and 157 each coordinate Fe cation. 2-oxoglutarate is bound at residue arginine 167.

Requires Fe(2+) as cofactor. The cofactor is L-ascorbate.

In Thermosynechococcus vestitus (strain NIES-2133 / IAM M-273 / BP-1), this protein is PKHD-type hydroxylase tll1907.